We begin with the raw amino-acid sequence, 88 residues long: Large ribosomal subunit protein bL27 (88 aa).

Residues 1 to 24 (MAHKKGTGSTRNGRDSNSKRLGVK) form a disordered region.

Belongs to the bacterial ribosomal protein bL27 family.

The sequence is that of Large ribosomal subunit protein bL27 from Prochlorococcus marinus (strain MIT 9303).